Here is a 387-residue protein sequence, read N- to C-terminus: UDP-N-acetylglucosamine--N-acetylmuramyl-(pentapeptide) pyrophosphoryl-undecaprenol N-acetylglucosamine transferase (387 aa).

UDP-N-acetyl-alpha-D-glucosamine is bound by residues 23–25 (TGG), Asn135, Arg174, Ser203, Ile261, 280–285 (ALTVSE), and Gln306.

The protein belongs to the glycosyltransferase 28 family. MurG subfamily.

The protein resides in the cell inner membrane. The catalysed reaction is di-trans,octa-cis-undecaprenyl diphospho-N-acetyl-alpha-D-muramoyl-L-alanyl-D-glutamyl-meso-2,6-diaminopimeloyl-D-alanyl-D-alanine + UDP-N-acetyl-alpha-D-glucosamine = di-trans,octa-cis-undecaprenyl diphospho-[N-acetyl-alpha-D-glucosaminyl-(1-&gt;4)]-N-acetyl-alpha-D-muramoyl-L-alanyl-D-glutamyl-meso-2,6-diaminopimeloyl-D-alanyl-D-alanine + UDP + H(+). It functions in the pathway cell wall biogenesis; peptidoglycan biosynthesis. Cell wall formation. Catalyzes the transfer of a GlcNAc subunit on undecaprenyl-pyrophosphoryl-MurNAc-pentapeptide (lipid intermediate I) to form undecaprenyl-pyrophosphoryl-MurNAc-(pentapeptide)GlcNAc (lipid intermediate II). The polypeptide is UDP-N-acetylglucosamine--N-acetylmuramyl-(pentapeptide) pyrophosphoryl-undecaprenol N-acetylglucosamine transferase (Colwellia psychrerythraea (strain 34H / ATCC BAA-681) (Vibrio psychroerythus)).